A 286-amino-acid polypeptide reads, in one-letter code: Ribosomal RNA small subunit methyltransferase H (286 aa).

Residues 25–27 (GGH), D45, L79, D93, and Q100 contribute to the S-adenosyl-L-methionine site.

This sequence belongs to the methyltransferase superfamily. RsmH family.

The protein localises to the cytoplasm. It catalyses the reaction cytidine(1402) in 16S rRNA + S-adenosyl-L-methionine = N(4)-methylcytidine(1402) in 16S rRNA + S-adenosyl-L-homocysteine + H(+). Its function is as follows. Specifically methylates the N4 position of cytidine in position 1402 (C1402) of 16S rRNA. The sequence is that of Ribosomal RNA small subunit methyltransferase H from Petrotoga mobilis (strain DSM 10674 / SJ95).